Reading from the N-terminus, the 208-residue chain is Thymidylate kinase (208 aa).

10–17 (GPEGSGKT) lines the ATP pocket.

It belongs to the thymidylate kinase family.

It carries out the reaction dTMP + ATP = dTDP + ADP. In terms of biological role, phosphorylation of dTMP to form dTDP in both de novo and salvage pathways of dTTP synthesis. This is Thymidylate kinase from Bacillus mycoides (strain KBAB4) (Bacillus weihenstephanensis).